The chain runs to 243 residues: Terpene cyclase nodB (243 aa).

The next 3 membrane-spanning stretches (helical) occupy residues 19-39 (ISDIFVFGMGVCWLINYAGMI), 50-70 (MAPLALCCNFAWEMVYGLIYP), and 75-95 (IEQGVFLAGLVVNLGVMYTAI). A glycan (N-linked (GlcNAc...) asparagine) is linked at asparagine 111. The next 4 helical transmembrane spans lie at 112–132 (ITLIFALGVLGSLTGHLALAA), 134–154 (IGPALGYSWGAVACQLLLSVG), 169–189 (SYTLWLSRFIGSGCVVGFAIL), and 205–225 (LVLWSLGVFIAVDSLYGICLW).

This sequence belongs to the paxB family.

The protein resides in the membrane. It participates in secondary metabolite biosynthesis. Functionally, terpene cyclase; part of the gene cluster that mediates the biosynthesis of the indole diterpenes nodulisporic acids (NA). Nodulisporic acid A (NAA) and its chemically modified derivatives are of particular significance because of their highly potent insecticidal activity against blood-feeding arthropods and lack of observable adverse effects on mammals, in particular the tremogenicity associated with the paspaline-derived IDTs is not observed. The geranylgeranyl diphosphate (GGPP) synthase ggs1, localized outside of the cluster, is proposed to catalyze the first step in nodulisporic acid biosynthesis via conversion of farnesyl pyrophosphate and isopentyl pyrophosphate into geranylgeranyl pyrophosphate (GGPP). Condensation of indole-3-glycerol phosphate with GGPP by the prenyl transferase nodC then forms 3-geranylgeranylindole (3-GGI). Epoxidation by the FAD-dependent monooxygenase nodM leads to a single-epoxidized-GGI that is substrate of the terpene cyclase nodB for cyclization to yield emindole SB. The terminal methyl carbon, C28, of emindole SB is then oxidized by the cytochrome P450 monooxygenase nodW to produce nodulisporic acid F (NAF), the pentacyclic core of NAA. NAF is converted to nodulisporic acid E (NAE) via prenylation. This step is probably performed by one of the indole diterpene prenyltransferases nodD1 or nodD2. Several oxidation steps performed by the FAD-linked oxidoreductase nodO and one of the cytochrome P450 monooxygenase nodR, nodX or nodZ further convert NAE to nodulisporic acid D (NAD). NAD is substrate of cytochrome P450 monooxygenase nodJ to produce the precursor of nodulisporic acid C (NAC), converted to NAC by one of the indole diterpene prenyltransferases nodD1 or nodD2. The FAD-dependent monooxygenase nodY2 then oxidizes NAC to nodulisporic acid B (NAB). Finally NAB is converted to NAA by one of the cytochrome P450 monooxygenases nodR, nodX or nodZ. The polypeptide is Terpene cyclase nodB (Hypoxylon pulicicidum).